The following is a 619-amino-acid chain: Kinesin light chain 4 (619 aa).

The residue at position 2 (Ser2) is an N-acetylserine. The stretch at 32–150 forms a coiled coil; sequence GLESLHSEHQ…EEEKKHLEFL (119 aa). One copy of the TPR 1 repeat lies at 55–88; that stretch reads QQGGHEEGLVHEKARQLRRSMENIELGLSEAQVM. The span at 156 to 175 shows a compositional bias: basic and acidic residues; it reads YDEDGHSMEEKEGDASKDSL. Residues 156–200 form a disordered region; sequence YDEDGHSMEEKEGDASKDSLDDLFPNEEEEDSSNDLSRGQGAAAA. Residue Ser174 is modified to Phosphoserine. Residues 179-188 show a composition bias toward acidic residues; sequence FPNEEEEDSS. TPR repeat units lie at residues 211 to 244, 253 to 286, 295 to 328, 337 to 370, and 379 to 412; these read LRTL…LERT, ATML…REST, AATL…REKV, AKQL…YERQ, and ARTK…AHVQ. Ser460 is subject to Phosphoserine. Residues 464 to 497 form a TPR 7 repeat; that stretch reads NTTLRNLGALYRRQGKLEAAETLEECALRSRKQG. Ser565, Ser566, and Ser590 each carry phosphoserine. Residues 571–619 form a disordered region; the sequence is RKLQGTEPRPSSSNMKRAASLNYLNQPNAAPLQTSRGLSASTVDLSSSS. The span at 592-608 shows a compositional bias: polar residues; sequence NYLNQPNAAPLQTSRGL. The segment covering 609–619 has biased composition (low complexity); sequence SASTVDLSSSS. The residue at position 612 (Thr612) is a Phosphothreonine.

Belongs to the kinesin light chain family. As to quaternary structure, oligomeric complex composed of two heavy chains and two light chains.

It localises to the cytoplasm. The protein resides in the cytoskeleton. Functionally, kinesin is a microtubule-associated force-producing protein that may play a role in organelle transport. The light chain may function in coupling of cargo to the heavy chain or in the modulation of its ATPase activity. The chain is Kinesin light chain 4 (Klc4) from Rattus norvegicus (Rat).